The chain runs to 226 residues: ATP synthase F(0) complex subunit a (226 aa).

6 consecutive transmembrane segments (helical) span residues 12–32 (PTVL…LLVP), 68–88 (WSLM…LGLF), 97–117 (QLSM…AMGL), 138–158 (IPML…ALAV), 164–184 (ITAG…MLTI), and 189–209 (TLIT…VALI).

It belongs to the ATPase A chain family. Component of the ATP synthase complex composed at least of ATP5F1A/subunit alpha, ATP5F1B/subunit beta, ATP5MC1/subunit c (homooctomer), MT-ATP6/subunit a, MT-ATP8/subunit 8, ATP5ME/subunit e, ATP5MF/subunit f, ATP5MG/subunit g, ATP5MK/subunit k, ATP5MJ/subunit j, ATP5F1C/subunit gamma, ATP5F1D/subunit delta, ATP5F1E/subunit epsilon, ATP5PF/subunit F6, ATP5PB/subunit b, ATP5PD/subunit d, ATP5PO/subunit OSCP. ATP synthase complex consists of a soluble F(1) head domain (subunits alpha(3) and beta(3)) - the catalytic core - and a membrane F(0) domain - the membrane proton channel (subunits c, a, 8, e, f, g, k and j). These two domains are linked by a central stalk (subunits gamma, delta, and epsilon) rotating inside the F1 region and a stationary peripheral stalk (subunits F6, b, d, and OSCP). Interacts with DNAJC30; interaction is direct.

The protein resides in the mitochondrion inner membrane. It catalyses the reaction H(+)(in) = H(+)(out). Subunit a, of the mitochondrial membrane ATP synthase complex (F(1)F(0) ATP synthase or Complex V) that produces ATP from ADP in the presence of a proton gradient across the membrane which is generated by electron transport complexes of the respiratory chain. ATP synthase complex consist of a soluble F(1) head domain - the catalytic core - and a membrane F(1) domain - the membrane proton channel. These two domains are linked by a central stalk rotating inside the F(1) region and a stationary peripheral stalk. During catalysis, ATP synthesis in the catalytic domain of F(1) is coupled via a rotary mechanism of the central stalk subunits to proton translocation. With the subunit c (ATP5MC1), forms the proton-conducting channel in the F(0) domain, that contains two crucial half-channels (inlet and outlet) that facilitate proton movement from the mitochondrial intermembrane space (IMS) into the matrix. Protons are taken up via the inlet half-channel and released through the outlet half-channel, following a Grotthuss mechanism. In Pongo pygmaeus (Bornean orangutan), this protein is ATP synthase F(0) complex subunit a.